Here is a 190-residue protein sequence, read N- to C-terminus: MEKKVDKNEFLNMVLLKLEEGKVFLGKHGLKINISLDNVRINSGSVSITVGDIYLKVDMRNSELVLNDLENHEVYIYSYANDEVKIRITQNTFYLYMQIDELKPVTQEVMLRAIEALRIPFSKREGLRIDIDLTQYHEIEYTSEDGLQLRYGVDDIQIKDDKLVMNGLAIDILNNDWFISFEKNVMSMIL.

This is an uncharacterized protein from Acidianus hospitalis (AFV-1).